Consider the following 339-residue polypeptide: uncharacterized protein (339 aa).

Zn(2+) is bound by residues histidine 17, histidine 19, histidine 197, and aspartate 278. Aspartate 279 contributes to the substrate binding site.

This sequence belongs to the metallo-dependent hydrolases superfamily. Adenosine and AMP deaminases family. Adenine deaminase type 2 subfamily. Zn(2+) serves as cofactor.

It localises to the cytoplasm. Its subcellular location is the nucleus. This is an uncharacterized protein from Schizosaccharomyces pombe (strain 972 / ATCC 24843) (Fission yeast).